Here is a 150-residue protein sequence, read N- to C-terminus: 3-dehydroquinate dehydratase (150 aa).

Y23 functions as the Proton acceptor in the catalytic mechanism. 3 residues coordinate substrate: N75, H81, and D88. Catalysis depends on H101, which acts as the Proton donor. Residues L102 to S103 and R112 contribute to the substrate site.

The protein belongs to the type-II 3-dehydroquinase family. Homododecamer.

It catalyses the reaction 3-dehydroquinate = 3-dehydroshikimate + H2O. It participates in metabolic intermediate biosynthesis; chorismate biosynthesis; chorismate from D-erythrose 4-phosphate and phosphoenolpyruvate: step 3/7. Catalyzes a trans-dehydration via an enolate intermediate. This is 3-dehydroquinate dehydratase from Pseudomonas savastanoi pv. phaseolicola (strain 1448A / Race 6) (Pseudomonas syringae pv. phaseolicola (strain 1448A / Race 6)).